The chain runs to 320 residues: Homoserine kinase (320 aa).

Position 100 to 110 (100 to 110 (PLSSGMGSSAA)) interacts with ATP.

The protein belongs to the GHMP kinase family. Homoserine kinase subfamily.

The protein resides in the cytoplasm. It catalyses the reaction L-homoserine + ATP = O-phospho-L-homoserine + ADP + H(+). The protein operates within amino-acid biosynthesis; L-threonine biosynthesis; L-threonine from L-aspartate: step 4/5. Its function is as follows. Catalyzes the ATP-dependent phosphorylation of L-homoserine to L-homoserine phosphate. This is Homoserine kinase from Chlorobium phaeovibrioides (strain DSM 265 / 1930) (Prosthecochloris vibrioformis (strain DSM 265)).